The chain runs to 197 residues: 7-methyl-GTP pyrophosphatase (197 aa).

Aspartate 79 serves as the catalytic Proton acceptor.

Belongs to the Maf family. YceF subfamily.

The protein resides in the cytoplasm. The catalysed reaction is N(7)-methyl-GTP + H2O = N(7)-methyl-GMP + diphosphate + H(+). In terms of biological role, nucleoside triphosphate pyrophosphatase that hydrolyzes 7-methyl-GTP (m(7)GTP). May have a dual role in cell division arrest and in preventing the incorporation of modified nucleotides into cellular nucleic acids. The chain is 7-methyl-GTP pyrophosphatase from Dictyostelium discoideum (Social amoeba).